A 218-amino-acid polypeptide reads, in one-letter code: Protein-methionine-sulfoxide reductase heme-binding subunit MsrQ (218 aa).

The next 5 helical transmembrane spans lie at 14 to 34 (AVHAAVLAPIALLGWQFWQVW), 60 to 80 (LLLITLAITPLRQLTGQAVLI), 86 to 106 (LGLYTFFYASVHLTAYLWLDL), 121 to 141 (PYITVGFTAWLLLVPLAITST), and 155 to 175 (LHMLIYPIGLLAVLHFWWLVK).

Belongs to the MsrQ family. Heterodimer of a catalytic subunit (MsrP) and a heme-binding subunit (MsrQ). It depends on FMN as a cofactor. Requires heme b as cofactor.

The protein resides in the cell inner membrane. Functionally, part of the MsrPQ system that repairs oxidized periplasmic proteins containing methionine sulfoxide residues (Met-O), using respiratory chain electrons. Thus protects these proteins from oxidative-stress damage caused by reactive species of oxygen and chlorine generated by the host defense mechanisms. MsrPQ is essential for the maintenance of envelope integrity under bleach stress, rescuing a wide series of structurally unrelated periplasmic proteins from methionine oxidation. MsrQ provides electrons for reduction to the reductase catalytic subunit MsrP, using the quinone pool of the respiratory chain. This Xanthomonas campestris pv. campestris (strain B100) protein is Protein-methionine-sulfoxide reductase heme-binding subunit MsrQ.